Here is a 95-residue protein sequence, read N- to C-terminus: uncharacterized protein (95 aa).

Positions 60–89 (VKNMINRIVEELDKRIDEIKEGLNELEKSG) form a coiled coil.

This is an uncharacterized protein from Sulfolobus islandicus filamentous virus (isolate Iceland/Hveragerdi) (SIFV).